Reading from the N-terminus, the 741-residue chain is Zinc finger and BTB domain-containing protein 20 (741 aa).

Basic and acidic residues predominate over residues 1 to 17 (MLERKKPKTAENQKASE). Positions 1 to 32 (MLERKKPKTAENQKASEENEITQPGGSSAKPG) are disordered. In terms of domain architecture, BTB spans 104 to 167 (CDVTVRIHGS…MYSGVLRVSQ (64 aa)). The tract at residues 203 to 235 (GIQDSGQDTPRGTPESGTSGQSSDTESGYLQSH) is disordered. Residues 206–235 (DSGQDTPRGTPESGTSGQSSDTESGYLQSH) are compositionally biased toward polar residues. T211 bears the Phosphothreonine mark. A Glycyl lysine isopeptide (Lys-Gly) (interchain with G-Cter in SUMO1); alternate cross-link involves residue K330. K330 participates in a covalent cross-link: Glycyl lysine isopeptide (Lys-Gly) (interchain with G-Cter in SUMO2); alternate. Positions 350–440 (RNESEECTED…SSPERSNEVE (91 aa)) are disordered. Position 353 is a phosphoserine (S353). The span at 354-367 (EECTEDTDQAEGTE) shows a compositional bias: acidic residues. A Phosphothreonine modification is found at T357. A Glycyl lysine isopeptide (Lys-Gly) (interchain with G-Cter in SUMO2) cross-link involves residue K371. The span at 404–423 (AEPTQPEQAAEAPAEGGPQT) shows a compositional bias: low complexity. Polar residues predominate over residues 424-434 (NQLETGASSPE). 4 consecutive C2H2-type zinc fingers follow at residues 578 to 600 (YECT…MFVH), 606 to 628 (HQCS…MVTH), 634 to 656 (YQCS…MRLH), and 662 to 684 (YECY…VALH). Phosphothreonine is present on residues T690 and T695. The segment at 715 to 737 (YVCSVCPAKFDQIEQFNDHMRMH) adopts a C2H2-type 5 zinc-finger fold. K723 is covalently cross-linked (Glycyl lysine isopeptide (Lys-Gly) (interchain with G-Cter in SUMO2)).

As to quaternary structure, can homodimerize. Binds to DNA. In terms of processing, sumoylated with SUMO1. Expressed in spleen, lymph node, thymus, peripheral blood leukocytes, and fetal liver.

Its subcellular location is the nucleus. Its function is as follows. May be a transcription factor that may be involved in hematopoiesis, oncogenesis, and immune responses. Plays a role in postnatal myogenesis, may be involved in the regulation of satellite cells self-renewal. In Homo sapiens (Human), this protein is Zinc finger and BTB domain-containing protein 20 (ZBTB20).